A 347-amino-acid chain; its full sequence is Protease HtpX homolog (347 aa).

The next 3 membrane-spanning stretches (helical) occupy residues 8-28 (IAFGLYLLGYIVMIIVAVVIA), 46-66 (ALTAVLIVLTTAFVIYLIAIV), and 76-96 (WGFILGMIFFVVLMNLITYIA). Residue His174 participates in Zn(2+) binding. Glu175 is a catalytic residue. His178 serves as a coordination point for Zn(2+). The next 2 membrane-spanning stretches (helical) occupy residues 185 to 205 (ALMLLFGVLPSILYYLGVSSV) and 221 to 241 (LLAAVGILAVVVSFLVQLLVL). Glu248 is a binding site for Zn(2+).

The protein belongs to the peptidase M48B family. Zn(2+) serves as cofactor.

The protein resides in the cell membrane. This is Protease HtpX homolog from Pyrobaculum islandicum (strain DSM 4184 / JCM 9189 / GEO3).